Here is a 132-residue protein sequence, read N- to C-terminus: Glycine cleavage system H protein (132 aa).

The 83-residue stretch at 24–106 (LVRIGISAFA…HGEGWLLVVR (83 aa)) folds into the Lipoyl-binding domain. Position 65 is an N6-lipoyllysine (lysine 65).

This sequence belongs to the GcvH family. The glycine cleavage system is composed of four proteins: P, T, L and H. The cofactor is (R)-lipoate.

In terms of biological role, the glycine cleavage system catalyzes the degradation of glycine. The H protein shuttles the methylamine group of glycine from the P protein to the T protein. This is Glycine cleavage system H protein from Prochlorococcus marinus (strain MIT 9313).